We begin with the raw amino-acid sequence, 184 residues long: Myosin regulatory light chain 1 (184 aa).

The segment at 1–29 (MFSSKENSLGAKRAPFSSNTTSSQRVAAQ) is disordered. Ser36 carries the phosphoserine modification. 2 EF-hand domains span residues 45–80 (SQIQELKEAFALLDKDGDGNIGREDVKTMLTSLNQD) and 114–149 (SPRNDLLEAFSTFDDTQSGKIPISTMRDALSSMGDR). Ca(2+) contacts are provided by Asp58, Asp60, Asp62, Asn64, and Asp69.

Binds to myosin II chains myo2 and myo3.

It localises to the cytoplasm. The chain is Myosin regulatory light chain 1 (rlc1) from Schizosaccharomyces pombe (strain 972 / ATCC 24843) (Fission yeast).